The sequence spans 561 residues: Oxygen-dependent choline dehydrogenase (561 aa).

An FAD-binding site is contributed by 7-36 (DYIIVGAGSAGNVLASRLTEDADVTVLLLE). H474 functions as the Proton acceptor in the catalytic mechanism.

Belongs to the GMC oxidoreductase family. FAD serves as cofactor.

The catalysed reaction is choline + A = betaine aldehyde + AH2. It carries out the reaction betaine aldehyde + NAD(+) + H2O = glycine betaine + NADH + 2 H(+). It participates in amine and polyamine biosynthesis; betaine biosynthesis via choline pathway; betaine aldehyde from choline (cytochrome c reductase route): step 1/1. Its function is as follows. Involved in the biosynthesis of the osmoprotectant glycine betaine. Catalyzes the oxidation of choline to betaine aldehyde and betaine aldehyde to glycine betaine at the same rate. The polypeptide is Oxygen-dependent choline dehydrogenase (Paraburkholderia phytofirmans (strain DSM 17436 / LMG 22146 / PsJN) (Burkholderia phytofirmans)).